We begin with the raw amino-acid sequence, 234 residues long: Sugar fermentation stimulation protein A (234 aa).

A DNA-binding region (H-T-H motif) is located at residues 201–220; sequence LLSEAQQRGVEILAYKAELS.

This sequence belongs to the SfsA family.

In terms of biological role, binds to DNA non-specifically. Could be a regulatory factor involved in maltose metabolism. In Escherichia coli O127:H6 (strain E2348/69 / EPEC), this protein is Sugar fermentation stimulation protein A.